The following is a 479-amino-acid chain: 5-hydroxytryptamine receptor 7 (479 aa).

Over 1–83 (MMDVNSSGRP…INYGRVEKVV (83 aa)) the chain is Extracellular. N-linked (GlcNAc...) asparagine glycans are attached at residues N5 and N66. The chain crosses the membrane as a helical span at residues 84 to 108 (IGSILTLITLLTIAGNCLVVISVCF). Residues 109 to 118 (VKKLRQPSNY) are Cytoplasmic-facing. A helical transmembrane segment spans residues 119 to 140 (LIVSLALADLSVAVAVMPFVSV). Over 141-152 (TDLIGGKWIFGH) the chain is Extracellular. A helical membrane pass occupies residues 153–178 (FFCNVFIAMDVMCCTASIMTLCVISI). C155 and C231 are oxidised to a cystine. D162 is a serotonin binding site. The Cytoplasmic portion of the chain corresponds to 179 to 198 (DRYLGITRPLTYPVRQNGKC). Residues 199–219 (MAKMILSVWLLSASITLPPLF) form a helical membrane-spanning segment. At 220–237 (GWAQNVNDDKVCLISQDF) the chain is on the extracellular side. Residues 238 to 260 (GYTIYSTAVAFYIPMSVMLFMYY) traverse the membrane as a helical segment. Residues 261–326 (QIYKAARKSA…SIFKREQKAA (66 aa)) are Cytoplasmic-facing. A helical transmembrane segment spans residues 327 to 352 (TTLGIIVGAFTVCWLPFFLLSTARPF). The Extracellular portion of the chain corresponds to 353 to 363 (ICGTSCSCIPL). Residues 364–387 (WVERTFLWLGYANSLINPFIYAFF) form a helical membrane-spanning segment. Residues 388–479 (NRDLRTTYRS…TVEKKVMIHD (92 aa)) lie on the Cytoplasmic side of the membrane. C401 carries the S-palmitoyl cysteine lipid modification.

It belongs to the G-protein coupled receptor 1 family. In terms of tissue distribution, predominant isoform in spleen, caudate and hippocampus. As to expression, expressed at lower levels. Minor isoform in terms of expression.

It is found in the cell membrane. G-protein coupled receptor for 5-hydroxytryptamine (serotonin), a biogenic hormone that functions as a neurotransmitter, a hormone and a mitogen. Ligand binding causes a conformation change that triggers signaling via guanine nucleotide-binding proteins (G proteins) and modulates the activity of downstream effectors. HTR7 is coupled to G(s) G alpha proteins and mediates activation of adenylate cyclase activity. This is 5-hydroxytryptamine receptor 7 from Homo sapiens (Human).